We begin with the raw amino-acid sequence, 84 residues long: Esculentin-1Vb (84 aa).

An N-terminal signal peptide occupies residues 1-22 (MFTLKKPLLLIVLLGIISLSLC). A propeptide spanning residues 23 to 36 (EQERNADEDEESET) is cleaved from the precursor. Cysteine 78 and cysteine 84 are disulfide-bonded.

As to expression, expressed by the skin glands.

It is found in the secreted. Antimicrobial peptide. In Odorrana versabilis (Chinese bamboo leaf odorous frog), this protein is Esculentin-1Vb.